We begin with the raw amino-acid sequence, 172 residues long: MSNPRVFFDMSLSGTPIGRIEMELFADTTPNTAENFRALCTGEKGMGKLGKPLHFKGSIFHRVIPGFMCQGGDFTAKNGTGGESIYGAKFKDENFIKKHTGAGILSMANSGPNTNGSQFFICTDKTSWLDGKHVVFGQVVKGLDVVKAIEKVGSDSGKTSKVVTITDCGQLS.

The 164-residue stretch at 7 to 170 folds into the PPIase cyclophilin-type domain; it reads FFDMSLSGTP…KVVTITDCGQ (164 aa).

Belongs to the cyclophilin-type PPIase family. In terms of assembly, interacts with A.tumefaciens VirD2. In terms of tissue distribution, ubiquitous, with higher levels in roots and flowers. Confined to vascular tissues. Also detected in stigmas, base of siliques and anthers.

The protein resides in the cytoplasm. It carries out the reaction [protein]-peptidylproline (omega=180) = [protein]-peptidylproline (omega=0). Its activity is regulated as follows. Binds cyclosporin A (CsA). CsA mediates some of its effects via an inhibitory action on PPIase. Functionally, PPIases accelerate the folding of proteins. It catalyzes the cis-trans isomerization of proline imidic peptide bonds in oligopeptides. This is Peptidyl-prolyl cis-trans isomerase CYP18-4 (CYP18-4) from Arabidopsis thaliana (Mouse-ear cress).